We begin with the raw amino-acid sequence, 315 residues long: Protein sprouty homolog 2 (315 aa).

Residues 1 to 14 (MEARAQSGSGSQPL) show a composition bias toward polar residues. Disordered stretches follow at residues 1–38 (MEARAQSGSGSQPLLQAPRDSGRQRGEPDPRDALPQQV) and 51–140 (NTNE…GSSF). The segment covering 20 to 32 (DSGRQRGEPDPRD) has biased composition (basic and acidic residues). Pro residues predominate over residues 88 to 100 (PRQPSRPQHPPAH). The segment covering 109 to 140 (RSISTVSSGSRSSTRTSTSSSSSEQRLLGSSF) has biased composition (low complexity). The interval 118–315 (SRSSTRTSTS…VPPRNFEKPT (198 aa)) is required for interaction with CAV1. An SPR domain is found at 177 to 291 (KCEDCGKCKC…CYDRVNRPGC (115 aa)). Positions 178-315 (CEDCGKCKCK…VPPRNFEKPT (138 aa)) are required for interaction with TESK1.

This sequence belongs to the sprouty family. As to quaternary structure, forms heterodimers with SPRY1. Forms a tripartite complex containing GAB1, METTL13 and SPRY2. Within the complex interacts with METTL13. Interacts with RAF1. Interacts (via C-terminus) with TESK1 (via C-terminus); the interaction disrupts SPRY2 interaction with GRB2, potentially via disruption of SPRY2 serine dephosphorylation. Interacts with PPP2R1A/PP2A-A and PPP2CA/PP2A-C; the interaction with PPP2CA/PP2A-C is inhibited by interaction with TESK1, possibly by vesicular sequestration of SPRY2. Inhibition of the interaction with the serine/threonine-protein phosphatase 2A (PP2A) holoenzyme results in loss of PP2A-mediated dephosphorylation, resulting in the loss of SPRY2 interaction with GRB2. Interacts with GRB2. Interacts with CBL/C-CBL; the interaction inhibits CBL-mediated ubiquitination of EGFR. Interacts (via C-terminus) with CAV1 (via C-terminus). Cleaved at Pro-144 by the prolyl endopeptidase FAP (seprase) activity (in vitro).

It is found in the cytoplasm. Its subcellular location is the cytoskeleton. The protein localises to the cell projection. It localises to the ruffle membrane. Antagonist of fibroblast growth factor (FGF) pathways via inhibition of FGF-mediated phosphorylation of ERK1/2. Thereby acts as an antagonist of FGF-induced retinal lens fiber differentiation, may inhibit limb bud outgrowth and may negatively modulate respiratory organogenesis. Inhibits TGFB-induced epithelial-to-mesenchymal transition in retinal lens epithelial cells. Inhibits CBL/C-CBL-mediated EGFR ubiquitination. The polypeptide is Protein sprouty homolog 2 (SPRY2) (Bos taurus (Bovine)).